A 369-amino-acid chain; its full sequence is Short chain dehydrogenase rstn4 (369 aa).

NADP(+) is bound by residues K88, D111, N138, Y234, and K238. Y234 acts as the Proton donor in catalysis. K238 acts as the Lowers pKa of active site Tyr in catalysis.

The protein belongs to the short-chain dehydrogenases/reductases (SDR) family.

It functions in the pathway antifungal biosynthesis. Its function is as follows. Short chain dehydrogenase; part of the gene cluster that mediates the biosynthesis of the tetrahydropyranyl antifungal agent restricticin that acts as an inhibitor of CYP51 and blocks the ergosterol biosynthesis. The highly reducing polyketide synthase rstn3, the short chain dehydrogenase rstn4, the cyclase rstn5, the FAD-dependent monooxygenase rstn6 and the enoylreductase rstn7 are required to generate the first stable intermediate desmethylrestrictinol. Rstn3 with rstn7 biosynthesize the first polyketide chain intermediate that is reduced by rstn4, followed by epoxidation by rstn6 before 6-endo cyclization via epoxide opening by rstn5 leads to desmethylrestrictinol. The methyltransferase rstn1 then catalyzes the C4 O-methylation of desmethylrestrictinol to produce restrictinol, and the nonribosomal peptide synthetase rstn8 catalyzes the C3 esterification of restrictinol with glycine that leads to restricticin. This Aspergillus nomiae NRRL (strain ATCC 15546 / NRRL 13137 / CBS 260.88 / M93) protein is Short chain dehydrogenase rstn4.